Consider the following 144-residue polypeptide: Small ribosomal subunit protein eS19B (144 aa).

This sequence belongs to the eukaryotic ribosomal protein eS19 family. Component of the small ribosomal subunit (SSU). Mature yeast ribosomes consist of a small (40S) and a large (60S) subunit. The 40S small subunit contains 1 molecule of ribosomal RNA (18S rRNA) and 33 different proteins (encoded by 57 genes). The large 60S subunit contains 3 rRNA molecules (25S, 5.8S and 5S rRNA) and 46 different proteins (encoded by 81 genes).

Its subcellular location is the cytoplasm. Component of the ribosome, a large ribonucleoprotein complex responsible for the synthesis of proteins in the cell. The small ribosomal subunit (SSU) binds messenger RNAs (mRNAs) and translates the encoded message by selecting cognate aminoacyl-transfer RNA (tRNA) molecules. The large subunit (LSU) contains the ribosomal catalytic site termed the peptidyl transferase center (PTC), which catalyzes the formation of peptide bonds, thereby polymerizing the amino acids delivered by tRNAs into a polypeptide chain. The nascent polypeptides leave the ribosome through a tunnel in the LSU and interact with protein factors that function in enzymatic processing, targeting, and the membrane insertion of nascent chains at the exit of the ribosomal tunnel. eS19 is required for proper maturation of the small (40S) ribosomal subunit. Binds to 40S pre-ribosomal particles, probably required after association of NOC4 but before association of ENP1, TSR1 and RIO2 with 20/21S pre-rRNA. In terms of biological role, required for proper maturation of the small (40S) ribosomal subunit. Binds to 40s pre-ribosomal particles, probably required after association of NOC4 but before association of ENP1, TSR1 and RIO2 with 20/21S pre-rRNA. The chain is Small ribosomal subunit protein eS19B from Saccharomyces cerevisiae (strain ATCC 204508 / S288c) (Baker's yeast).